The following is a 337-amino-acid chain: Mannitol dehydrogenase (337 aa).

Residues cysteine 27, histidine 49, cysteine 80, cysteine 83, cysteine 86, cysteine 94, and cysteine 143 each contribute to the Zn(2+) site.

It belongs to the zinc-containing alcohol dehydrogenase family. The cofactor is Zn(2+).

It carries out the reaction D-mannitol + NAD(+) = D-mannose + NADH + H(+). Functionally, oxidizes mannitol to mannose. Provides the initial step by which translocated mannitol is committed to central metabolism and, by regulating mannitol pool size, is important in regulating salt tolerance at the cellular level. This Petroselinum crispum (Parsley) protein is Mannitol dehydrogenase (ELI3).